A 329-amino-acid chain; its full sequence is BTB/POZ domain-containing protein At1g55760 (329 aa).

One can recognise a BTB domain in the interval 164-231 (TDITINASDG…IYGNIQNEDF (68 aa)).

The protein operates within protein modification; protein ubiquitination. Functionally, may act as a substrate-specific adapter of an E3 ubiquitin-protein ligase complex (CUL3-RBX1-BTB) which mediates the ubiquitination and subsequent proteasomal degradation of target proteins. This is BTB/POZ domain-containing protein At1g55760 from Arabidopsis thaliana (Mouse-ear cress).